The sequence spans 310 residues: Protoheme IX farnesyltransferase (310 aa).

The next 9 membrane-spanning stretches (helical) occupy residues 37-57 (LITVFAGYVVAASYLTDDVLL), 64-84 (LTLLWTLLGSGLVIAGSCYLN), 113-133 (ILALGLGILATGTVLLLIVNH), 134-154 (VAAVFGLIGSFVYVVIYTMWL), 159-181 (TINTVVGGISGAVPPIIGFAAVT), 186-208 (IDAWILFLIMFVWQPPHFLALAM), 215-237 (RAAGIPMLPVVNGFAITKRQIVW), 257-277 (MLVMAVLGGYWLYMGLKGLKI), and 290-310 (MFFFSLFYFTAWIVTVVLVSL).

It belongs to the UbiA prenyltransferase family. Protoheme IX farnesyltransferase subfamily. In terms of assembly, interacts with CtaA.

The protein localises to the cell membrane. The enzyme catalyses heme b + (2E,6E)-farnesyl diphosphate + H2O = Fe(II)-heme o + diphosphate. Its pathway is porphyrin-containing compound metabolism; heme O biosynthesis; heme O from protoheme: step 1/1. Its function is as follows. Converts heme B (protoheme IX) to heme O by substitution of the vinyl group on carbon 2 of heme B porphyrin ring with a hydroxyethyl farnesyl side group. This Exiguobacterium sibiricum (strain DSM 17290 / CCUG 55495 / CIP 109462 / JCM 13490 / 255-15) protein is Protoheme IX farnesyltransferase.